The sequence spans 269 residues: Glutamate racemase (269 aa).

Substrate is bound by residues D14 to S15 and Y46 to S47. C78 serves as the catalytic Proton donor/acceptor. Residue N79–T80 coordinates substrate. C189 acts as the Proton donor/acceptor in catalysis. T190 to H191 is a binding site for substrate.

Belongs to the aspartate/glutamate racemases family.

The catalysed reaction is L-glutamate = D-glutamate. Its pathway is cell wall biogenesis; peptidoglycan biosynthesis. Provides the (R)-glutamate required for cell wall biosynthesis. This is Glutamate racemase from Haemophilus influenzae (strain PittGG).